The primary structure comprises 428 residues: Stromal membrane-associated protein 2 (428 aa).

In terms of domain architecture, Arf-GAP spans 13 to 139 (QAVLGSLLSE…INTFRKEKDD (127 aa)). Residues 28–51 (CADCQAKGPRWASWNIGVFICIRC) form a C4-type zinc finger. A compositionally biased stretch (basic and acidic residues) spans 161–172 (VKMPQKKEETQQ). Disordered regions lie at residues 161-182 (VKMPQKKEETQQSRKSSPKSTE) and 222-258 (SRKVSGSMPTSGSAGSVPENLNLFPEPGGKGEEAGKK).

In terms of assembly, may interact with clathrin heavy chains.

Functionally, GTPase activating protein. May play a role in clathrin-dependent retrograde transport from early endosomes to the trans-Golgi network. This is Stromal membrane-associated protein 2 (SMAP2) from Gallus gallus (Chicken).